A 228-amino-acid polypeptide reads, in one-letter code: Endonuclease V (228 aa).

Residues aspartate 43 and aspartate 109 each contribute to the Mg(2+) site.

Belongs to the endonuclease V family. The cofactor is Mg(2+).

The protein resides in the cytoplasm. It carries out the reaction Endonucleolytic cleavage at apurinic or apyrimidinic sites to products with a 5'-phosphate.. In terms of biological role, DNA repair enzyme involved in the repair of deaminated bases. Selectively cleaves double-stranded DNA at the second phosphodiester bond 3' to a deoxyinosine leaving behind the intact lesion on the nicked DNA. The protein is Endonuclease V of Dictyoglomus turgidum (strain DSM 6724 / Z-1310).